The following is a 202-amino-acid chain: Glycerol-3-phosphate acyltransferase (202 aa).

A run of 6 helical transmembrane segments spans residues 2–22, 51–71, 80–100, 116–136, 137–157, and 158–178; these read INLL…AVVV, KAAI…VLLA, VDET…LFPL, ILFA…LIIA, FFFR…PFFY, and VLMN…VLLI.

This sequence belongs to the PlsY family. In terms of assembly, probably interacts with PlsX.

The protein resides in the cell inner membrane. It carries out the reaction an acyl phosphate + sn-glycerol 3-phosphate = a 1-acyl-sn-glycero-3-phosphate + phosphate. Its pathway is lipid metabolism; phospholipid metabolism. Functionally, catalyzes the transfer of an acyl group from acyl-phosphate (acyl-PO(4)) to glycerol-3-phosphate (G3P) to form lysophosphatidic acid (LPA). This enzyme utilizes acyl-phosphate as fatty acyl donor, but not acyl-CoA or acyl-ACP. The polypeptide is Glycerol-3-phosphate acyltransferase (Cupriavidus metallidurans (strain ATCC 43123 / DSM 2839 / NBRC 102507 / CH34) (Ralstonia metallidurans)).